A 110-amino-acid chain; its full sequence is Small ribosomal subunit protein mS33 (110 aa).

The span at 84–95 (KRRGKGAPKKMK) shows a compositional bias: basic residues. The tract at residues 84–110 (KRRGKGAPKKMKKDAAATAKGKGKKKK) is disordered.

This sequence belongs to the mitochondrion-specific ribosomal protein mS33 family. Component of the mitochondrial small ribosomal subunit (mt-SSU). Mature yeast 74S mitochondrial ribosomes consist of a small (37S) and a large (54S) subunit. The 37S small subunit contains a 15S ribosomal RNA (15S mt-rRNA) and 34 different proteins. The 54S large subunit contains a 21S rRNA (21S mt-rRNA) and 46 different proteins.

The protein localises to the mitochondrion. Functionally, component of the mitochondrial ribosome (mitoribosome), a dedicated translation machinery responsible for the synthesis of mitochondrial genome-encoded proteins, including at least some of the essential transmembrane subunits of the mitochondrial respiratory chain. The mitoribosomes are attached to the mitochondrial inner membrane and translation products are cotranslationally integrated into the membrane. In Saccharomyces cerevisiae (strain ATCC 204508 / S288c) (Baker's yeast), this protein is Small ribosomal subunit protein mS33 (RSM27).